The sequence spans 334 residues: D-alanine--D-alanine ligase (334 aa).

The ATP-grasp domain occupies 121–327; that stretch reads KLWYDALDIP…FSEFLVQCVT (207 aa). Residue 151-206 coordinates ATP; it reads AFGHWGSIFVKAARQGSSVGCYKVTTEDQIAPAIEAAFGFSEQVLVEQAVKPRELE. The Mg(2+) site is built by Asp281, Glu294, and Asn296.

The protein belongs to the D-alanine--D-alanine ligase family. It depends on Mg(2+) as a cofactor. The cofactor is Mn(2+).

It is found in the cytoplasm. It catalyses the reaction 2 D-alanine + ATP = D-alanyl-D-alanine + ADP + phosphate + H(+). It participates in cell wall biogenesis; peptidoglycan biosynthesis. Its function is as follows. Cell wall formation. This Vibrio cholerae serotype O1 (strain ATCC 39315 / El Tor Inaba N16961) protein is D-alanine--D-alanine ligase.